The primary structure comprises 305 residues: Probable GTP 3',8-cyclase (305 aa).

Positions 6-228 (NHRRPLVSLR…MTRKFMQDRK (223 aa)) constitute a Radical SAM core domain. Residue arginine 15 participates in GTP binding. Residues cysteine 22 and cysteine 26 each coordinate [4Fe-4S] cluster. Tyrosine 28 lines the S-adenosyl-L-methionine pocket. A [4Fe-4S] cluster-binding site is contributed by cysteine 29. Arginine 62 contributes to the GTP binding site. Position 66 (glycine 66) interacts with S-adenosyl-L-methionine. Threonine 92 lines the GTP pocket. Residue serine 116 coordinates S-adenosyl-L-methionine. Lysine 153 contacts GTP. Residues cysteine 249 and cysteine 252 each contribute to the [4Fe-4S] cluster site. Residue 254 to 256 (RLR) participates in GTP binding. Cysteine 266 contributes to the [4Fe-4S] cluster binding site.

The protein belongs to the radical SAM superfamily. MoaA family. Requires [4Fe-4S] cluster as cofactor.

It carries out the reaction GTP + AH2 + S-adenosyl-L-methionine = (8S)-3',8-cyclo-7,8-dihydroguanosine 5'-triphosphate + 5'-deoxyadenosine + L-methionine + A + H(+). Its pathway is cofactor biosynthesis; molybdopterin biosynthesis. In terms of biological role, catalyzes the cyclization of GTP to (8S)-3',8-cyclo-7,8-dihydroguanosine 5'-triphosphate. The sequence is that of Probable GTP 3',8-cyclase from Methanothermobacter marburgensis (strain ATCC BAA-927 / DSM 2133 / JCM 14651 / NBRC 100331 / OCM 82 / Marburg) (Methanobacterium thermoautotrophicum).